The following is a 311-amino-acid chain: Mediator of RNA polymerase II transcription subunit 27-B (311 aa).

This sequence belongs to the Mediator complex subunit 27 family. As to quaternary structure, component of the Mediator complex.

The protein localises to the nucleus. Its function is as follows. Component of the Mediator complex, a coactivator involved in the regulated transcription of nearly all RNA polymerase II-dependent genes. Mediator functions as a bridge to convey information from gene-specific regulatory proteins to the basal RNA polymerase II transcription machinery. Mediator is recruited to promoters by direct interactions with regulatory proteins and serves as a scaffold for the assembly of a functional preinitiation complex with RNA polymerase II and the general transcription factors. The sequence is that of Mediator of RNA polymerase II transcription subunit 27-B (med27-b) from Xenopus laevis (African clawed frog).